The sequence spans 302 residues: Beta-1,2-mannobiose phosphorylase (302 aa).

This sequence belongs to the glycosyl hydrolase 130 family. As to quaternary structure, monomer.

The enzyme catalyses beta-D-mannopyranosyl-(1-&gt;2)-D-mannopyranose + phosphate = alpha-D-mannose 1-phosphate + D-mannose. It functions in the pathway nucleotide-sugar biosynthesis; GDP-alpha-D-mannose biosynthesis. Probably involved in a salvage pathway for GDP-D-mannose biosynthesis. Catalyzes the reversible phosphorolysis of 1,2-beta-oligomannan. In phosphorolytic reactions, prefers beta-1,2-mannobiose (beta-1,2-Man2) as substrate. Produces alpha-D-mannose 1-phosphate, which is the precursor of GDP-D-mannose. In Thermoanaerobacter sp. (strain X514), this protein is Beta-1,2-mannobiose phosphorylase.